The chain runs to 141 residues: N,N-dimethylformamidase alpha subunit (141 aa).

As to quaternary structure, heterotetramer of two DmfA1 (alpha) and two DmfA2 (beta) subunits.

It carries out the reaction N,N-dimethylformamide + H2O = dimethylamine + formate. In terms of biological role, hydrolyzes N,N-dimethylformamide, and to a lesser extent N,N-dimethylacetamide and N,N-diethylacetamide. Has no activity against the substituted amides N-methylformamide, N-ethylformamide, N-ethylformamide and N-methylacetamide or the unsubstituted amides formamide, nicotinamide, acetoamide, benzamide, acetamide and acrylamide. The sequence is that of N,N-dimethylformamidase alpha subunit from Paracoccus aminophilus.